The chain runs to 288 residues: UAP56-interacting factor (288 aa).

Positions 11–29 (TIDKIDMSLDDIIKLNKQE) match the UAP56-binding motif motif. The interval 183–202 (DLPELSKTPPWRTSVSSGGS) is disordered.

This sequence belongs to the UIF family.

The protein resides in the nucleus. Its subcellular location is the nucleoplasm. It is found in the nucleus speckle. In terms of biological role, required for mRNA export from the nucleus to the cytoplasm. Acts as an adapter that uses the ddx39b/uap56-nfx1 pathway to ensure efficient mRNA export and delivering to the nuclear pore. The polypeptide is UAP56-interacting factor (fyttd1) (Xenopus laevis (African clawed frog)).